The following is a 395-amino-acid chain: S-adenosylmethionine synthase 2 (395 aa).

E9 provides a ligand contact to Mg(2+). An ATP-binding site is contributed by H15. E43 provides a ligand contact to K(+). The L-methionine site is built by E56 and Q99. Residues 167 to 169, 235 to 238, D246, 252 to 253, A269, K273, and K277 each bind ATP; these read DGK, SGRF, and RK. D246 serves as a coordination point for L-methionine. An L-methionine-binding site is contributed by K277.

This sequence belongs to the AdoMet synthase family. In terms of assembly, homotetramer. It depends on Mn(2+) as a cofactor. Requires Mg(2+) as cofactor. Co(2+) serves as cofactor. The cofactor is K(+).

The protein resides in the cytoplasm. It carries out the reaction L-methionine + ATP + H2O = S-adenosyl-L-methionine + phosphate + diphosphate. It functions in the pathway amino-acid biosynthesis; S-adenosyl-L-methionine biosynthesis; S-adenosyl-L-methionine from L-methionine: step 1/1. Its function is as follows. Catalyzes the formation of S-adenosylmethionine from methionine and ATP. The reaction comprises two steps that are both catalyzed by the same enzyme: formation of S-adenosylmethionine (AdoMet) and triphosphate, and subsequent hydrolysis of the triphosphate. The chain is S-adenosylmethionine synthase 2 (METK2) from Suaeda salsa (Seepweed).